We begin with the raw amino-acid sequence, 362 residues long: Peptide chain release factor 1 (362 aa).

Gln238 carries the post-translational modification N5-methylglutamine.

It belongs to the prokaryotic/mitochondrial release factor family. Methylated by PrmC. Methylation increases the termination efficiency of RF1.

The protein resides in the cytoplasm. Functionally, peptide chain release factor 1 directs the termination of translation in response to the peptide chain termination codons UAG and UAA. This is Peptide chain release factor 1 from Psychrobacter cryohalolentis (strain ATCC BAA-1226 / DSM 17306 / VKM B-2378 / K5).